The primary structure comprises 274 residues: tRNA (guanine-N(1)-)-methyltransferase (274 aa).

Residues G116 and 140–145 (LGDYVL) contribute to the S-adenosyl-L-methionine site.

It belongs to the RNA methyltransferase TrmD family. In terms of assembly, homodimer.

The protein localises to the cytoplasm. It catalyses the reaction guanosine(37) in tRNA + S-adenosyl-L-methionine = N(1)-methylguanosine(37) in tRNA + S-adenosyl-L-homocysteine + H(+). Functionally, specifically methylates guanosine-37 in various tRNAs. This is tRNA (guanine-N(1)-)-methyltransferase from Arthrobacter sp. (strain FB24).